The primary structure comprises 338 residues: MSVSGLPFDDFRTLLRDLPGPDARALVAARERDAQLTKPPGALGRLEEIAFWLAAWTGRPPAVNRPLVAIFAGNHGVTRQGITPFPPAVTQQMVENFAAGGAAINQICVTHDLGLKVFDLALDYPTGDITEEAALSERDCAATMAFGMEAIAGGTDLLCIGEMGIGNTTIAAAINYALYGGSARDWVGPGTGSEGDMLERKVAAVEKAVALHSDHLDDPLEIMRRLGGREIAAMAGAILAARMERIPVLIDGYVATAAAAILKAANPSALDHCLIGHVSAEPGHLRSIEMLGKTPLLALGMRLGEGTGAALAAGIVKAAAACHSGMATFAQAGVSGKH.

Glu-305 serves as the catalytic Proton acceptor.

Belongs to the CobT family.

It catalyses the reaction 5,6-dimethylbenzimidazole + nicotinate beta-D-ribonucleotide = alpha-ribazole 5'-phosphate + nicotinate + H(+). Its pathway is nucleoside biosynthesis; alpha-ribazole biosynthesis; alpha-ribazole from 5,6-dimethylbenzimidazole: step 1/2. Its function is as follows. Catalyzes the synthesis of alpha-ribazole-5'-phosphate from nicotinate mononucleotide (NAMN) and 5,6-dimethylbenzimidazole (DMB). This chain is Nicotinate-nucleotide--dimethylbenzimidazole phosphoribosyltransferase, found in Rhizobium etli (strain CIAT 652).